The following is a 322-amino-acid chain: HPr kinase/phosphorylase (322 aa).

Active-site residues include His-146 and Lys-167. Residue Gly-161 to Ser-168 coordinates ATP. Residue Ser-168 participates in Mg(2+) binding. Asp-185 serves as the catalytic Proton acceptor; for phosphorylation activity. Proton donor; for dephosphorylation activity. Residues Leu-209–Asp-218 form an important for the catalytic mechanism of both phosphorylation and dephosphorylation region. Glu-210 lines the Mg(2+) pocket. The active site involves Arg-250. The important for the catalytic mechanism of dephosphorylation stretch occupies residues Gln-271 to Arg-276.

This sequence belongs to the HPrK/P family. In terms of assembly, homohexamer. Mg(2+) is required as a cofactor.

The catalysed reaction is [HPr protein]-L-serine + ATP = [HPr protein]-O-phospho-L-serine + ADP + H(+). It catalyses the reaction [HPr protein]-O-phospho-L-serine + phosphate + H(+) = [HPr protein]-L-serine + diphosphate. Catalyzes the ATP- as well as the pyrophosphate-dependent phosphorylation of a specific serine residue in HPr, a phosphocarrier protein of the phosphoenolpyruvate-dependent sugar phosphotransferase system (PTS). HprK/P also catalyzes the pyrophosphate-producing, inorganic phosphate-dependent dephosphorylation (phosphorolysis) of seryl-phosphorylated HPr (P-Ser-HPr). The polypeptide is HPr kinase/phosphorylase (Burkholderia mallei (strain NCTC 10247)).